The following is a 418-amino-acid chain: Glutamyl-tRNA(Gln) amidotransferase subunit D (418 aa).

Residues P81–S407 enclose the Asparaginase/glutaminase domain. Catalysis depends on residues T91, T166, D167, and K243.

The protein belongs to the asparaginase 1 family. GatD subfamily. In terms of assembly, heterodimer of GatD and GatE.

The enzyme catalyses L-glutamyl-tRNA(Gln) + L-glutamine + ATP + H2O = L-glutaminyl-tRNA(Gln) + L-glutamate + ADP + phosphate + H(+). Allows the formation of correctly charged Gln-tRNA(Gln) through the transamidation of misacylated Glu-tRNA(Gln) in organisms which lack glutaminyl-tRNA synthetase. The reaction takes place in the presence of glutamine and ATP through an activated gamma-phospho-Glu-tRNA(Gln). The GatDE system is specific for glutamate and does not act on aspartate. This Archaeoglobus fulgidus (strain ATCC 49558 / DSM 4304 / JCM 9628 / NBRC 100126 / VC-16) protein is Glutamyl-tRNA(Gln) amidotransferase subunit D.